Reading from the N-terminus, the 347-residue chain is Uroporphyrinogen decarboxylase (347 aa).

Residues 24–28 (RQAGR), F42, D73, Y150, T205, and H320 each bind substrate.

The protein belongs to the uroporphyrinogen decarboxylase family. Homodimer.

It is found in the cytoplasm. It carries out the reaction uroporphyrinogen III + 4 H(+) = coproporphyrinogen III + 4 CO2. It participates in porphyrin-containing compound metabolism; protoporphyrin-IX biosynthesis; coproporphyrinogen-III from 5-aminolevulinate: step 4/4. Functionally, catalyzes the decarboxylation of four acetate groups of uroporphyrinogen-III to yield coproporphyrinogen-III. The chain is Uroporphyrinogen decarboxylase from Gloeobacter violaceus (strain ATCC 29082 / PCC 7421).